A 183-amino-acid polypeptide reads, in one-letter code: 1,6-anhydro-N-acetylmuramyl-L-alanine amidase AmpD (183 aa).

Positions 30–167 (LLVVHNISLP…APDRKTDPGP (138 aa)) constitute an N-acetylmuramoyl-L-alanine amidase domain. His-34 lines the Zn(2+) pocket. Glu-116 serves as the catalytic Proton acceptor. Residues His-154 and Asp-164 each contribute to the Zn(2+) site.

It belongs to the N-acetylmuramoyl-L-alanine amidase 2 family. Zn(2+) serves as cofactor.

The protein localises to the cytoplasm. The catalysed reaction is Hydrolyzes the link between N-acetylmuramoyl residues and L-amino acid residues in certain cell-wall glycopeptides.. In terms of biological role, involved in cell wall peptidoglycan recycling. Specifically cleaves the amide bond between the lactyl group of N-acetylmuramic acid and the alpha-amino group of the L-alanine in degradation products containing an anhydro N-acetylmuramyl moiety. Is also involved in beta-lactamase induction. The polypeptide is 1,6-anhydro-N-acetylmuramyl-L-alanine amidase AmpD (ampD) (Escherichia coli (strain K12)).